The primary structure comprises 275 residues: MMSELLQQQTWRVIDHTSLGPSFDAKQSFAFDDALCESVGSGQSQPVVRLWVHHQTVVLGIQDTKLPYIEKGLAYLHEQGWRTIVRNSGGLAVVLDEGVLNVSLIFPDTKKGIDIDRGYEAMATLIAHMLPEAHVQTGEVVGSYCPGSFDLSINGKKFAGISQRRIRGGVAVQVYICVNGSGAERAGWIREFYERSLAGEQTKFTYPTIVPHTMASLSELLSKEMTVSALVIRLYEALQAFGSRLEPSSLTPAEWERYYMYFQRMIDRNETMLPT.

The BPL/LPL catalytic domain maps to 42–246; it reads GQSQPVVRLW…ALQAFGSRLE (205 aa). Catalysis depends on Cys-145, which acts as the Acyl-thioester intermediate.

It belongs to the octanoyltransferase LipL family.

The catalysed reaction is N(6)-octanoyl-L-lysyl-[glycine-cleavage complex H protein] + L-lysyl-[lipoyl-carrier protein] = N(6)-octanoyl-L-lysyl-[lipoyl-carrier protein] + L-lysyl-[glycine-cleavage complex H protein]. The protein operates within protein modification; protein lipoylation via endogenous pathway; protein N(6)-(lipoyl)lysine from octanoyl-[acyl-carrier-protein]. Catalyzes the amidotransfer (transamidation) of the octanoyl moiety from octanoyl-GcvH to the lipoyl domain of the E2 subunit of lipoate-dependent enzymes. The chain is Octanoyl-[GcvH]:protein N-octanoyltransferase from Anoxybacillus flavithermus (strain DSM 21510 / WK1).